A 1404-amino-acid polypeptide reads, in one-letter code: MRSHNDFESITIRLASPERIKEWSYGEVKKPETINYRTLKPEKDGLFCEKIFGTTKDWECYCGKFKSIRYKGVICDKCGVEVTHSKVRRERMGHIELAAPVSHIWYYRSVPSRMGLLLDMTVNQLKSVLYFEKYVIIDPADSGRSRGELIDEEEYHGYLDEYGDKFVAGIGADAIKELLARIDVDAEARMIRQKIQDKDKISDKRILKRLEVLEAFRDSGNRPEWMVLDIVPVIPPELRPMVQLEGGRFATSDLNDLYRRVINRNNRLKRLLALKAPEIIVRNEKRMLQEAVDALFDNSRRKRAVKGKGNRPLKSISDMLKGKQGRFRQNLLGKRVDYSGRSVIVVGPELKYHEMGLPKKMALELFKPFIMKRLVDLDLAPNIKSAKKKVEAEDKEVFDVLEYVVKEHPVMLNRAPTLHRLGIQAFLPVLVEGKAIKLHPLVCHAFNADFDGDQMAIHVPLTPKAQLETWMLMLSPHNILNPANGHPICGPTQDIVLGIYYLTSELPSEPGAPLKSFSNLDEVHYAIDRGVVEFRTKISVYHQGKILETTPGRLIFNTILPEGYAYVNRPLSDKETNRIIADVYDKYGPAKTVLMLDDIKKLGYRYATLFAPTISIEDIRVSPGKVGLVGDANKEVEKADSEYRKGIITNEERRKKVIEIWTKTNDLITESMFKELEKDKGGFNPVFIMAASGARGSKQQIRQLAGMRGLMAKPSGEIIELAIRSNFREGLSVLEFFISTHGARKGLADTALKTADAGYLTRRLVDISQDVIISEDDCGTEESISLGIVKEGENVIVSLNDRVFGRYTAEDVIDPVTDKVVYPRNTLITREVGQKVENLGYDKIRVRSPLTCESKQGVCIRCYGMDMARLIPAEIGEAVGTIAAQSIGQPGTQLTMRTFHIGGAASAKVQEKEHKVSYTGIVNNINGRLITNEKSQSVFSRRGSIVIQRLIQQYKTEELSNLRVENGQKVDKGELVATSPSGENITSAMPGAVHIENGIFRILGEEAVIPVKTGTVVNVKVNDITQPNQPLAEFDPYNEVGISEIDGTVQWMDLEIGKNVRRDEDLRTSNILLKVIEQRREKLNPRIAVISGGSREEYSVPVDAIISVQDGDKVKAGDILFKIPTVAEKTRDITGGLPRVDELFEARRPKDATTLAETDGKIEISGEIVKEKRVLYIHPDNPDQEKVKVTIPIGKQIRVRNGDFVKRGDQIDDGNLDPHDILRVKGVTALQVYLVQEVQEVYRLQGVHINDKHIEVVVRQMLRKVLITDSGDTSFVNQQQIDRLMFNEENKRVIAEGGSPAESVPILLGLTKASLNTESFFSAASFQETTKVLTDAAIKGKTDNLMGLKENVIIGHMIPAGTGTKKYKDISVFKSAYGDLDRPLEEEEEEEIPQSIADDSDGDE.

4 residues coordinate Zn(2+): cysteine 60, cysteine 62, cysteine 75, and cysteine 78. Aspartate 449, aspartate 451, and aspartate 453 together coordinate Mg(2+). Zn(2+) is bound by residues cysteine 778, cysteine 852, cysteine 859, and cysteine 862. A disordered region spans residues 1381 to 1404; sequence DRPLEEEEEEEIPQSIADDSDGDE. Residues 1384–1404 show a composition bias toward acidic residues; that stretch reads LEEEEEEEIPQSIADDSDGDE.

This sequence belongs to the RNA polymerase beta' chain family. As to quaternary structure, the RNAP catalytic core consists of 2 alpha, 1 beta, 1 beta' and 1 omega subunit. When a sigma factor is associated with the core the holoenzyme is formed, which can initiate transcription. It depends on Mg(2+) as a cofactor. Zn(2+) is required as a cofactor.

It carries out the reaction RNA(n) + a ribonucleoside 5'-triphosphate = RNA(n+1) + diphosphate. DNA-dependent RNA polymerase catalyzes the transcription of DNA into RNA using the four ribonucleoside triphosphates as substrates. This is DNA-directed RNA polymerase subunit beta' from Leptospira borgpetersenii serovar Hardjo-bovis (strain JB197).